The following is a 446-amino-acid chain: MQTQARPPVPQGPRFNHPATPQQVRRPINAPLPGQTAQIQGNRGPQPPKKKKRYADKLIQPKVRELVPESQAYMDLLAFEQKLDSTITRKKIDVQEALKRPQKIKKRLRIYISHTFIAGKEPEKEGDDASVPMWELRVEGRLLDDMQHPTVGANPRPAPKRKFSSFFKSLVIELDKDIYGPDNHLVEWHRTPQTNETDGFQVKRPGDRPVKCTILLLLDYQPMKFKLHPRLAKVLGIAAETRPRIIEALWQYIKTHKLQDPQDRDTINNDLFLEQCFGVSKMRFMEIPQRLHQLLQQPDPLVLNHIIQRPDDGQDKTSACYDIDVELEDPVKQQMANFVHNQTNANDIQLLDQKIFDLVDQINEMKLRRDFFLRFSNEPSGFIKKWVVSQNSDLKTLTESSGDGESDRYATTYSTTDTDEGVSRYMYQKIQQKRAELEQSLGIRNN.

A disordered region spans residues Met1–Arg53. One can recognise an SWIB/MDM2 domain in the interval Tyr220–Gln297.

The protein belongs to the SMARCD family. As to quaternary structure, component of the multiprotein chromatin-remodeling complexes SWI/SNF: SWI/SNF-A (BAF), SWI/SNF-B (PBAF) and related complexes. The canonical complex contains a catalytic subunit swsn-4, core subunits swsn-1 and swsn-5, and accessory subunits swsn-3, swsn-6, phf-10, dpff-1, swsn-9 and either ham-3/swsn-2.1 or swsn-2.2. May interact with blmp-1. Broadly expressed in all cell types.

The protein localises to the nucleus. Functionally, involved in transcriptional activation and repression of select genes by chromatin remodeling (alteration of DNA-nucleosome topology). Component of SWI/SNF chromatin remodeling complexes that carry out key enzymatic activities, changing chromatin structure by altering DNA-histone contacts within a nucleosome in an ATP-dependent manner. Required for the blmp-1-mediated transcriptional activation or repression of several hypodermal genes such as bed-3. Involved in regulating differentiation, migration and axon pathfinding of specific serotonergic neurons (HSNs). Probably regulates vulva development through the let-60/Ras pathway. May be involved in regulation of developmental processes in the embryo driven by the Wnt pathway. Involved in gonadogenesis. The sequence is that of SWI/SNF chromatin-remodeling accessory subunit 1 from Caenorhabditis elegans.